We begin with the raw amino-acid sequence, 30 residues long: Alpha-conotoxin EIVA (30 aa).

3 cysteine pairs are disulfide-bonded: Cys2-Cys16, Cys3-Cys11, and Cys14-Cys24. Pro7, Pro13, Pro21, Pro22, and Pro27 each carry 4-hydroxyproline. A Glycine amide modification is found at Gly30.

Expressed by the venom duct.

Its subcellular location is the secreted. Functionally, alpha-conotoxins act on postsynaptic membranes, they bind to the nicotinic acetylcholine receptors (nAChR) and thus inhibit them. This toxin binds with high affinity to both fetal (alpha-1-beta-1-epsilon-delta (CHRNA1-CHRNB1-CHRND-CHRNE) subunits) and adult (alpha-1/beta-1/gamma/delta subunits) mammalian muscle nicotinic acetylcholine receptors (nAChR). This is Alpha-conotoxin EIVA from Conus ermineus (Agate cone).